The sequence spans 273 residues: Glutamate 5-kinase (273 aa).

ATP is bound at residue lysine 15. Substrate is bound by residues serine 55, aspartate 142, and asparagine 158. Residues serine 178–aspartate 179 and threonine 220–lysine 226 each bind ATP.

This sequence belongs to the glutamate 5-kinase family.

It is found in the cytoplasm. It catalyses the reaction L-glutamate + ATP = L-glutamyl 5-phosphate + ADP. It functions in the pathway amino-acid biosynthesis; L-proline biosynthesis; L-glutamate 5-semialdehyde from L-glutamate: step 1/2. Its function is as follows. Catalyzes the transfer of a phosphate group to glutamate to form L-glutamate 5-phosphate. The protein is Glutamate 5-kinase of Streptococcus pyogenes serotype M18 (strain MGAS8232).